Reading from the N-terminus, the 424-residue chain is UDP-N-acetylglucosamine 1-carboxyvinyltransferase (424 aa).

Residue 22 to 23 (KN) participates in phosphoenolpyruvate binding. Arg98 lines the UDP-N-acetyl-alpha-D-glucosamine pocket. Catalysis depends on Cys122, which acts as the Proton donor. Residue Cys122 is modified to 2-(S-cysteinyl)pyruvic acid O-phosphothioketal. UDP-N-acetyl-alpha-D-glucosamine-binding positions include 127-131 (RPVDQ), Asp312, and Ile334.

The protein belongs to the EPSP synthase family. MurA subfamily.

It is found in the cytoplasm. It catalyses the reaction phosphoenolpyruvate + UDP-N-acetyl-alpha-D-glucosamine = UDP-N-acetyl-3-O-(1-carboxyvinyl)-alpha-D-glucosamine + phosphate. The protein operates within cell wall biogenesis; peptidoglycan biosynthesis. In terms of biological role, cell wall formation. Adds enolpyruvyl to UDP-N-acetylglucosamine. This is UDP-N-acetylglucosamine 1-carboxyvinyltransferase from Xanthomonas axonopodis pv. citri (strain 306).